Reading from the N-terminus, the 215-residue chain is Adenylate kinase (215 aa).

ATP is bound at residue glycine 10–threonine 15. Positions serine 30–valine 59 are NMP. Residues threonine 31, arginine 36, lysine 57–valine 59, glycine 85–arginine 88, and glutamine 92 each bind AMP. The tract at residues glycine 122 to aspartate 159 is LID. Residues arginine 123 and isoleucine 132–tyrosine 133 each bind ATP. The AMP site is built by arginine 156 and arginine 167. Leucine 200 is an ATP binding site.

The protein belongs to the adenylate kinase family. As to quaternary structure, monomer.

The protein localises to the cytoplasm. The catalysed reaction is AMP + ATP = 2 ADP. The protein operates within purine metabolism; AMP biosynthesis via salvage pathway; AMP from ADP: step 1/1. Catalyzes the reversible transfer of the terminal phosphate group between ATP and AMP. Plays an important role in cellular energy homeostasis and in adenine nucleotide metabolism. This Buchnera aphidicola subsp. Acyrthosiphon pisum (strain 5A) protein is Adenylate kinase.